An 815-amino-acid polypeptide reads, in one-letter code: MAALASFTRNSRSYGQQPIDVTQQGQRDRSVMSLDAQGRSKMSNINYTRPAALSTSDSTIGVFRRAPSSFSGASSSSSNHHHPVYHSHNSLPPTLIGGSPHSASSNSLAQGHRNPALGSGNTLTRSYHQPSSTNSSTSNLHGPLGTYSRDLKQAIRDISPPVINSSANPHLVNYIHTSSFDNGSYEFPSGQAQQQRRLGGSQQHLAPLQQTSSSLYSNPQSSSSQLLGQQAVRSNYAYQQSLPRQQHINSHQTQAFFGTIRAPGNSTNIVTPLRASKTMIDVLAPVRDSVAAQATTGALPSVGTSSSNGSSNSSSGVGSGGSGSLMTQSIGGPNKHLSASHSTLNTASTHDSMMHTKIPKSPSNESLSRSHTSSSGGSQGGHNSNSGSNSGFRPEDAVQTFGAKLVPYEKNEIYNYTRVFFVGSHAKKQPGVIGGANNGGYDDENGSYQLVVHDHIAYRYEVLKVIGKGSFGQVIKAFDHKYQQYVALKLVRNEKRFHRQADEEIRILDHLRRQDSDGTHNIIHMLDYFNFRNHKCITFELLSINLYELIKRNKFQGFSLMLVRKFAYSMLLCLDLLQKNRLIHCDLKPENVLLKQQGRSGIKVIDFGSSCFDDQRIYTYIQSRFYRAPEVILGTKYGMPIDMWSLGCILAELLTGYPLLPGEDENDQLALIIELLGMPPPKSLETAKRARTFITSKGYPRYCTATSMPDGSVVLAGARSKRGKMRGPPESRSWSTALKNMGDELFVDFLKRCLDWDPETRMTPAQALKHKWLRRRLPNPPRDGMDSMGGLADHDKKADLPNIDSNANILMRKKF.

4 disordered regions span residues 1–49, 67–146, 185–204, and 298–395; these read MAAL…NYTR, PSSF…PLGT, YEFPSGQAQQQRRLGGSQQH, and ALPS…FRPE. Composition is skewed to polar residues over residues 7–25 and 40–49; these read FTRNSRSYGQQPIDVTQQG and SKMSNINYTR. Positions 68–78 are enriched in low complexity; it reads SSFSGASSSSS. Polar residues-rich tracts occupy residues 119 to 140 and 190 to 204; these read SGNTLTRSYHQPSSTNSSTSNL and GQAQQQRRLGGSQQH. A compositionally biased stretch (low complexity) spans 301–316; that stretch reads SVGTSSSNGSSNSSSG. Residues 325 to 351 are compositionally biased toward polar residues; sequence LMTQSIGGPNKHLSASHSTLNTASTHD. Phosphoserine; by cdk-1 is present on serine 361. Residues 363-391 show a composition bias toward low complexity; the sequence is SNESLSRSHTSSSGGSQGGHNSNSGSNSG. Positions 460-773 constitute a Protein kinase domain; sequence YEVLKVIGKG…PAQALKHKWL (314 aa). Residues 466–474 and lysine 489 each bind ATP; that span reads IGKGSFGQV. Residue aspartate 586 is the Proton acceptor of the active site. At tyrosine 620 the chain carries Phosphotyrosine; by autocatalysis.

The protein belongs to the protein kinase superfamily. CMGC Ser/Thr protein kinase family. MNB/DYRK subfamily. As to quaternary structure, part of a complex, consisting of pseudophosphatases egg-3, egg-4, egg-5 and kinase mbk-2. Interacts (via Tyr-618 and Tyr-620) with egg-4 (via tyrosine-protein phosphatase domain) and egg-5 (via tyrosine-protein phosphatase domain); mbk-2 tyrosine phosphorylation enhances the interaction. The interaction inhibits mbk-2 kinase activity and is required for mbk-2 oocyte cortex localization. Interacts (via N-terminus) with egg-3 (via tyrosine-protein phosphatase domain); the interaction does not affect mbk-2 kinase activity, is enhanced by mbk-2 tyrosine phosphorylation status and requires prior binding of mbk-2 to egg-4 and egg-5. Mg(2+) serves as cofactor. Post-translationally, autophosphorylated.

Its subcellular location is the cytoplasm. It localises to the cell cortex. It carries out the reaction L-seryl-[protein] + ATP = O-phospho-L-seryl-[protein] + ADP + H(+). It catalyses the reaction L-threonyl-[protein] + ATP = O-phospho-L-threonyl-[protein] + ADP + H(+). The enzyme catalyses L-tyrosyl-[protein] + ATP = O-phospho-L-tyrosyl-[protein] + ADP + H(+). Its activity is regulated as follows. Activated during oocyte maturation by phosphorylation on Ser-361 by cdk-1. The pseudotyrosine phosphatases egg-4 and egg-5 sequester activated mbk-2 until the meiotic divisions and inhibit mbk-2 kinase activity directly, using a mixed-inhibition mechanism that does not involve tyrosine dephosphorylation. Its function is as follows. Required for oocyte-to-zygote transition in which it phosphorylates oocyte proteins, including mei-1, oma-1, oma-2, mex-5, and mex-6, modifying their activity and/or stability following meiosis. Through phosphorylation of P granule components including meg-1, promotes the disassembly of zygotic P granules in the anterior cytoplasm during zygote polarization, and thus plays a role in P granule distribution and segregation in early stage embryos following meiosis. Functions in both spindle positioning and in the posterior localization of cytoplasmic determinants, including pie-1, pos-1, and pgl-1, in early embryos. Involved in the asymmetric distribution of plk-1 at the 2-cell embryonic stage. In Caenorhabditis briggsae, this protein is Dual specificity tyrosine-phosphorylation-regulated kinase mbk-2.